The following is a 365-amino-acid chain: Mitogen-activated protein kinase HOG1 (365 aa).

Residues 20–306 enclose the Protein kinase domain; that stretch reads YSDLQPVGMG…ATNALAHEYL (287 aa). ATP contacts are provided by residues 26-34 and Lys-49; that span reads VGMGAFGLV. Asp-148 serves as the catalytic Proton acceptor. The short motif at 178-180 is the TXY element; sequence TGY.

This sequence belongs to the protein kinase superfamily. Ser/Thr protein kinase family. MAP kinase subfamily. HOG1 sub-subfamily. The cofactor is Mg(2+).

It localises to the cytoplasm. It is found in the nucleus. It carries out the reaction L-seryl-[protein] + ATP = O-phospho-L-seryl-[protein] + ADP + H(+). The catalysed reaction is L-threonyl-[protein] + ATP = O-phospho-L-threonyl-[protein] + ADP + H(+). Its function is as follows. Proline-directed serine/threonine-protein kinase involved in a signal transduction pathway that is activated by changes in the osmolarity of the extracellular environment. Controls osmotic regulation of transcription of target genes. Involved in environmental stress response, hyphal growth, conidiation and possibly secondary metabolism such as ustiloxin biosynthesis or the biosynthesis of other phytotoxic compounds that are inhibitory to rice shoot growth during seed germination. Plays a key role in responses to cell wall and membrane stresses but not oxidative stress. The protein is Mitogen-activated protein kinase HOG1 of Ustilaginoidea virens (Rice false smut fungus).